The sequence spans 959 residues: MSDKTNDDKTLSVNPKKTLTLKRPGVEQSTVRQNFSHGRTKAVVVETKKRKFSRPDEKPEVEAAAAPKPAAPAAAPQQAPASAPVSASAAQASAPQPAPVKAPATKAPAAPSAPVTKPHVAQQRPVHQRPGGQQAQRPRPADRSGMVLNTLSRSEMDARRRALEEAQIREVEERARAVEEAKRRAEEDARRAKEREESARRQAEEEARLKAEAEARRKAEEEAAKRMPQPEARSERRDDARPAPYGARPQQAGRPQGGRPQPAGRPQQGSPRPAPIIADAAPIAGKPLPQSQLRKPGQSDDDDDRRSDAARRGVAAKPEVRAPKVVKGEDDRRRGKLTLTSNLEEEGRSRSLSAMRRRQEKFKRSQMQETREKISREVTIPETITLQELAQRMAERSVDIIKYLMKQGQMMKPGDVIDADTAQLIAEEFGHTVKRVAESDVEEGIFDVADNESAMVSRPPVVTIMGHVDHGKTSLLDAIRHANVVSGEAGGITQHIGAYQVVQNGQKITFIDTPGHAAFTAMRARGAQATDIAILVVAADDSVMPQTIESINHAKAAGVPIIVAINKIDKPAADPQKVRTALLQHEVFVESMGGEVLDVEVSAKNKINLDKLLDAVLLQAEMLDLKADPDRTAEGVVIEAQLDRGRGSVATVLIQKGTLHPGDILVAGSEWGRVRALVNDRGEHVKEAGPAMPVEILGLQGTPQAGDRFAVVANEAKAREIAEYRQRLARDKAVARQSGARGSLEQMMNQLQVSGTKEFPLVIKGDVQGSIEAITNALDKLGTDEVRARIVHSGAGGITESDVSLAEASNAAIIGFNVRANKQARDSAEQQGIEIRYYNIIYDLIDDVKAAMSGLLSPERRETFLGNAEILEVFNITKVGKVAGCRVTEGKVERGAGVRLIRDNVVIHEGKLKTLKRFKDEVAEVPSGQECGMAFENYDDIRAGDVIEAFRVEHVSRTL.

The span at 1-10 shows a compositional bias: basic and acidic residues; sequence MSDKTNDDKT. Residues 1–374 are disordered; sequence MSDKTNDDKT…SQMQETREKI (374 aa). The span at 27-37 shows a compositional bias: polar residues; it reads EQSTVRQNFSH. 2 stretches are compositionally biased toward low complexity: residues 63-118 and 128-138; these read AAAA…VTKP and QRPGGQQAQRP. 2 stretches are compositionally biased toward basic and acidic residues: residues 154–225 and 232–241; these read SEMD…EAAK and ARSERRDDAR. Positions 246–284 are enriched in low complexity; that stretch reads GARPQQAGRPQGGRPQPAGRPQQGSPRPAPIIADAAPIA. Residues 318–333 show a composition bias toward basic and acidic residues; sequence PEVRAPKVVKGEDDRR. The tr-type G domain occupies 457–626; sequence SRPPVVTIMG…LLQAEMLDLK (170 aa). The interval 466 to 473 is G1; sequence GHVDHGKT. 466 to 473 contacts GTP; sequence GHVDHGKT. The G2 stretch occupies residues 491-495; the sequence is GITQH. The interval 512 to 515 is G3; it reads DTPG. GTP contacts are provided by residues 512–516 and 566–569; these read DTPGH and NKID. The tract at residues 566–569 is G4; it reads NKID. A G5 region spans residues 602–604; it reads SAK.

The protein belongs to the TRAFAC class translation factor GTPase superfamily. Classic translation factor GTPase family. IF-2 subfamily.

It localises to the cytoplasm. Functionally, one of the essential components for the initiation of protein synthesis. Protects formylmethionyl-tRNA from spontaneous hydrolysis and promotes its binding to the 30S ribosomal subunits. Also involved in the hydrolysis of GTP during the formation of the 70S ribosomal complex. The protein is Translation initiation factor IF-2 of Brucella suis biovar 1 (strain 1330).